Reading from the N-terminus, the 1357-residue chain is DNA-directed RNA polymerase subunit beta (1357 aa).

The protein belongs to the RNA polymerase beta chain family. As to quaternary structure, the RNAP catalytic core consists of 2 alpha, 1 beta, 1 beta' and 1 omega subunit. When a sigma factor is associated with the core the holoenzyme is formed, which can initiate transcription.

It carries out the reaction RNA(n) + a ribonucleoside 5'-triphosphate = RNA(n+1) + diphosphate. Functionally, DNA-dependent RNA polymerase catalyzes the transcription of DNA into RNA using the four ribonucleoside triphosphates as substrates. The protein is DNA-directed RNA polymerase subunit beta of Pseudomonas fluorescens (strain Pf0-1).